The sequence spans 146 residues: Aminoglycoside N(6')-acetyltransferase type 1 (146 aa).

Residues 1–146 (MNIMPVSESL…RVVYFKKHIG (146 aa)) form the N-acetyltransferase domain. Residues Trp22, His25, Tyr66, and Glu79 each coordinate substrate. Acetyl-CoA is bound at residue 81 to 83 (IYV). A substrate-binding site is contributed by Asp115. Asn120 provides a ligand contact to acetyl-CoA. Glu136 serves as a coordination point for substrate.

As to quaternary structure, homodimer.

It carries out the reaction kanamycin B + acetyl-CoA = N(6')-acetylkanamycin B + CoA + H(+). In terms of biological role, catalyzes the transfer of an acetyl group from acetyl-CoA to the 6'-amino group of aminoglycoside molecules conferring resistance to antibiotics containing the purpurosamine ring including amikacin, kanamycin, tobramycin and netilmicin. In Acinetobacter genomosp. 13, this protein is Aminoglycoside N(6')-acetyltransferase type 1.